Reading from the N-terminus, the 842-residue chain is Glycogen phosphorylase, muscle form (842 aa).

At Ser2 the chain carries N-acetylserine. Phosphoserine; by PHK; in form phosphorylase A is present on Ser15. Positions 43 and 76 each coordinate AMP. Phosphotyrosine occurs at positions 204 and 227. 310–319 (RRFKSSKFGC) contacts AMP. A Phosphoserine modification is found at Ser430. Tyr473 bears the Phosphotyrosine mark. Residue Ser514 is modified to Phosphoserine. Residue Lys681 is modified to N6-(pyridoxal phosphate)lysine. 2 positions are modified to phosphoserine: Ser747 and Ser748.

It belongs to the glycogen phosphorylase family. In terms of assembly, homodimer. Homotetramer; to form the enzymatically active phosphorylase A. Pyridoxal 5'-phosphate serves as cofactor. Post-translationally, phosphorylation of Ser-15 converts phosphorylase B (unphosphorylated) to phosphorylase A.

The catalysed reaction is [(1-&gt;4)-alpha-D-glucosyl](n) + phosphate = [(1-&gt;4)-alpha-D-glucosyl](n-1) + alpha-D-glucose 1-phosphate. With respect to regulation, allosterically regulated through the non-covalent binding of metabolites, being activated by AMP and inhibited by ATP, ADP, and glucose-6-phosphate. The activity is also controlled by post-translational modifications including phosphorylation. Its function is as follows. Allosteric enzyme that catalyzes the rate-limiting step in glycogen catabolism, the phosphorolytic cleavage of glycogen to produce glucose-1-phosphate, and plays a central role in maintaining cellular and organismal glucose homeostasis. The chain is Glycogen phosphorylase, muscle form from Homo sapiens (Human).